A 282-amino-acid polypeptide reads, in one-letter code: Putative hydrolase BceJ2315_61450 (282 aa).

Residues E124, E126, and D155 each coordinate Mg(2+).

It belongs to the FAH family. Mg(2+) is required as a cofactor.

This chain is Putative hydrolase BceJ2315_61450, found in Burkholderia cenocepacia (strain ATCC BAA-245 / DSM 16553 / LMG 16656 / NCTC 13227 / J2315 / CF5610) (Burkholderia cepacia (strain J2315)).